We begin with the raw amino-acid sequence, 237 residues long: MGRIGLVVTDLVLSFMWIWAGVLVNILVHGVLGFSRTDPSGEIVRYLFSIISMFIFAYLQQATKGGLYNPLTALAAGVSGGFSSFIFSVFVRIPVEVIGSILAVKHIIHVFPEIGKGPKLNVAIHHGALTEGILTFFIVLLSMGLTRKIPGSFFMKTWIGSLAKLTLHILGSDLTGGCMNPAAVMGWAYARGEHITKEHLLVYWLGPVKATLLAVWFFKVVFKPLTEEQEKPKAKSE.

Helical transmembrane passes span F15–S35, P39–L59, L71–V91, V122–S142, I169–Y189, and V202–F222. The NPA 1 motif lies at N69–L71. Residues N180–A182 carry the NPA 2 motif.

This sequence belongs to the MIP/aquaporin (TC 1.A.8) family. SIP (TC 1.A.8.10) subfamily. Expressed in dividing cells and elongating regions of the root tips, emerging lateral roots, root steles, cotyledons, main veins of the rosette leaves, vascular tissues of the flower petals, stigma, stamens (anthers and filaments), pollen and the top and bottom (receptacle) of siliques.

It localises to the endoplasmic reticulum membrane. Functionally, water channel required to facilitate the transport of water across cell membrane. Inactive in yeast cells. This chain is Probable aquaporin SIP2-1 (SIP2-1), found in Arabidopsis thaliana (Mouse-ear cress).